Consider the following 622-residue polypeptide: 4-hydroxyphenylalkanoate adenylyltransferase (622 aa).

Belongs to the ATP-dependent AMP-binding enzyme family.

It carries out the reaction 17-(4-hydroxyphenyl)heptadecanoate + holo-[(phenol)carboxyphthiodiolenone synthase] + ATP = 17-(4-hydroxyphenyl)heptadecanoyl-[(phenol)carboxyphthiodiolenone synthase] + AMP + diphosphate. The enzyme catalyses 19-(4-hydroxyphenyl)nonadecanoate + holo-[(phenol)carboxyphthiodiolenone synthase] + ATP = 19-(4-hydroxyphenyl)nonadecanoyl-[(phenol)carboxyphthiodiolenone synthase] + AMP + diphosphate. It functions in the pathway lipid metabolism; fatty acid biosynthesis. Its function is as follows. Catalyzes the activation of long-chain fatty acids as acyl-adenylates (acyl-AMP), which are then transferred to the multifunctional polyketide synthase PpsA for further chain extension. Involved in the biosynthesis of phenolphthiocerol, which is an important intermediate in the biosynthesis of phenolic glycolipid (PGL), also called mycosid B. In Mycobacterium marinum (strain ATCC BAA-535 / M), this protein is 4-hydroxyphenylalkanoate adenylyltransferase (fadD29).